The sequence spans 326 residues: Probable sodium/potassium-transporting ATPase subunit beta-3 (326 aa).

Over 1–59 (MMSSRTRKIYLFVFMFISTSLQLMNGEAKAEPETFRQFLYNKQKGTVLGRTGTSWCQIT) the chain is Cytoplasmic. A helical; Signal-anchor for type II membrane protein transmembrane segment spans residues 60-80 (VFYIIFYIFLSAFFIGCLAIF). Over 81–326 (LKTLDPKVPR…DKKPVAAPAA (246 aa)) the chain is Lumenal. N-linked (GlcNAc...) asparagine glycosylation is found at Asn144 and Asn147. A disulfide bridge connects residues Cys234 and Cys291.

This sequence belongs to the X(+)/potassium ATPases subunit beta family. In terms of assembly, the sodium/potassium-transporting ATPase is composed of a catalytic alpha subunit, an auxiliary non-catalytic beta subunit and an additional regulatory subunit.

The protein localises to the cell membrane. In terms of biological role, this is the non-catalytic component of the active enzyme, which catalyzes the hydrolysis of ATP coupled with the exchange of Na(+) and K(+) ions across the plasma membrane. The beta subunit regulates, through assembly of alpha/beta heterodimers, the number of sodium pumps transported to the plasma membrane. Implicated in genomic response to various soil bacteria that affects fitness, lifespan and brood size. The chain is Probable sodium/potassium-transporting ATPase subunit beta-3 (nkb-3) from Caenorhabditis briggsae.